Reading from the N-terminus, the 218-residue chain is 7-cyano-7-deazaguanine synthase (218 aa).

Tyr9–Leu19 contacts ATP. 4 residues coordinate Zn(2+): Cys185, Cys193, Cys196, and Cys199.

It belongs to the QueC family. Requires Zn(2+) as cofactor.

It catalyses the reaction 7-carboxy-7-deazaguanine + NH4(+) + ATP = 7-cyano-7-deazaguanine + ADP + phosphate + H2O + H(+). It participates in purine metabolism; 7-cyano-7-deazaguanine biosynthesis. Functionally, catalyzes the ATP-dependent conversion of 7-carboxy-7-deazaguanine (CDG) to 7-cyano-7-deazaguanine (preQ(0)). This Pseudoalteromonas translucida (strain TAC 125) protein is 7-cyano-7-deazaguanine synthase.